The following is a 969-amino-acid chain: Isoleucine--tRNA ligase (969 aa).

The 'HIGH' region motif lies at 68-78; sequence PYANGALHMGH. An L-isoleucyl-5'-AMP-binding site is contributed by E585. The 'KMSKS' region signature appears at 626–630; it reads KMSKS. K629 is a binding site for ATP. Zn(2+) is bound by residues C939, C942, C959, and C962.

The protein belongs to the class-I aminoacyl-tRNA synthetase family. IleS type 1 subfamily. In terms of assembly, monomer. Zn(2+) is required as a cofactor.

It is found in the cytoplasm. It carries out the reaction tRNA(Ile) + L-isoleucine + ATP = L-isoleucyl-tRNA(Ile) + AMP + diphosphate. In terms of biological role, catalyzes the attachment of isoleucine to tRNA(Ile). As IleRS can inadvertently accommodate and process structurally similar amino acids such as valine, to avoid such errors it has two additional distinct tRNA(Ile)-dependent editing activities. One activity is designated as 'pretransfer' editing and involves the hydrolysis of activated Val-AMP. The other activity is designated 'posttransfer' editing and involves deacylation of mischarged Val-tRNA(Ile). In Prochlorococcus marinus (strain MIT 9211), this protein is Isoleucine--tRNA ligase.